Reading from the N-terminus, the 281-residue chain is 40S small subunit processome assembly factor 1 (281 aa).

Residues 29-141 (LGETEGETEQ…DEDEPAKNKT (113 aa)) form a disordered region. 2 positions are modified to phosphoserine: Ser67 and Ser75. N6-acetyllysine is present on Lys172. The disordered stretch occupies residues 221–254 (ETDIFKKKKKKGRGQEDRRSKKSAPSILSSGQVG). Ser267 is subject to Phosphoserine.

In terms of assembly, part of the small subunit (SSU) processome, composed of more than 70 proteins and the RNA chaperone small nucleolar RNA (snoRNA) U3.

Its subcellular location is the chromosome. It is found in the nucleus. The protein resides in the nucleolus. Functionally, part of the small subunit (SSU) processome, first precursor of the small eukaryotic ribosomal subunit. During the assembly of the SSU processome in the nucleolus, many ribosome biogenesis factors, an RNA chaperone and ribosomal proteins associate with the nascent pre-rRNA and work in concert to generate RNA folding, modifications, rearrangements and cleavage as well as targeted degradation of pre-ribosomal RNA by the RNA exosome. Prevents helicase DHX37 to be recruited before post-A1 state. The sequence is that of 40S small subunit processome assembly factor 1 from Mus musculus (Mouse).